The primary structure comprises 109 residues: Small ribosomal subunit protein uS17 (109 aa).

The protein belongs to the universal ribosomal protein uS17 family. In terms of assembly, part of the 30S ribosomal subunit.

One of the primary rRNA binding proteins, it binds specifically to the 5'-end of 16S ribosomal RNA. In Methanococcoides burtonii (strain DSM 6242 / NBRC 107633 / OCM 468 / ACE-M), this protein is Small ribosomal subunit protein uS17.